The following is a 342-amino-acid chain: Anthranilate phosphoribosyltransferase (342 aa).

Residues G84, 87–88 (GD), T92, 94–97 (NIST), 112–120 (KHGNRGVSS), and S124 each bind 5-phospho-alpha-D-ribose 1-diphosphate. G84 serves as a coordination point for anthranilate. A Mg(2+)-binding site is contributed by S96. N115 contributes to the anthranilate binding site. Anthranilate is bound at residue R170. Mg(2+) is bound by residues D229 and E230.

It belongs to the anthranilate phosphoribosyltransferase family. Homodimer. Requires Mg(2+) as cofactor.

The catalysed reaction is N-(5-phospho-beta-D-ribosyl)anthranilate + diphosphate = 5-phospho-alpha-D-ribose 1-diphosphate + anthranilate. The protein operates within amino-acid biosynthesis; L-tryptophan biosynthesis; L-tryptophan from chorismate: step 2/5. Functionally, catalyzes the transfer of the phosphoribosyl group of 5-phosphorylribose-1-pyrophosphate (PRPP) to anthranilate to yield N-(5'-phosphoribosyl)-anthranilate (PRA). The polypeptide is Anthranilate phosphoribosyltransferase (Cupriavidus metallidurans (strain ATCC 43123 / DSM 2839 / NBRC 102507 / CH34) (Ralstonia metallidurans)).